The primary structure comprises 200 residues: Histone chaperone asf1b (200 aa).

Belongs to the ASF1 family. Interacts with histone H3 and histone H4.

The protein resides in the nucleus. In terms of biological role, histone chaperone that facilitates histone deposition and histone exchange and removal during nucleosome assembly and disassembly. This Xenopus tropicalis (Western clawed frog) protein is Histone chaperone asf1b (asf1b).